Here is a 99-residue protein sequence, read N- to C-terminus: Probable small ribosomal subunit protein cS23 (99 aa).

This sequence belongs to the chloroplast-specific ribosomal protein cS23 family. Part of the 30S ribosomal subunit.

In terms of biological role, probably a ribosomal protein or a ribosome-associated protein. This Synechococcus sp. (strain JA-2-3B'a(2-13)) (Cyanobacteria bacterium Yellowstone B-Prime) protein is Probable small ribosomal subunit protein cS23.